Consider the following 128-residue polypeptide: Calcitonin gene-related peptide 1 (128 aa).

The first 25 residues, M1–A25, serve as a signal peptide directing secretion. The propeptide occupies V26 to Q80. C84 and C89 are joined by a disulfide. F119 is modified (phenylalanine amide). Positions D125 to A128 are excised as a propeptide.

This sequence belongs to the calcitonin family.

The protein resides in the secreted. In terms of biological role, CGRP1/CALCA is a peptide hormone that induces vasodilation mediated by the CALCRL-RAMP1 receptor complex. Dilates a variety of vessels including the coronary, cerebral and systemic vasculature. Its abundance in the CNS also points toward a neurotransmitter or neuromodulator role. It also elevates platelet cAMP. CGRP1 can also bind and activate CALCR-RAMP1 (AMYR1) receptor complex. This is Calcitonin gene-related peptide 1 from Rattus norvegicus (Rat).